Consider the following 301-residue polypeptide: HTH-type transcriptional regulator EstR (301 aa).

The HTH lysR-type domain maps to 5 to 62 (PSLRQLSYLVTLSETLHFTEAARRSFVTQSTLSGGIMELERLLGGVLVERDRQNVRLT). Positions 22-41 (FTEAARRSFVTQSTLSGGIM) form a DNA-binding region, H-T-H motif.

The protein belongs to the LysR transcriptional regulatory family.

In terms of biological role, transcriptional regulator of the esterase operon. This chain is HTH-type transcriptional regulator EstR (estR), found in Acinetobacter baylyi (strain ATCC 33305 / BD413 / ADP1).